The sequence spans 67 residues: Kappa-conotoxin-like 2 (67 aa).

A signal peptide spans 1–26; it reads MMFRLTSVSCFLLVIACLNLFQVVLT. 4 disulfides stabilise this stretch: cysteine 29/cysteine 43, cysteine 36/cysteine 48, cysteine 42/cysteine 51, and cysteine 47/cysteine 55. Residue phenylalanine 59 is modified to Phenylalanine amide. The propeptide occupies 63 to 67; sequence ATFQE.

Belongs to the conotoxin I2 superfamily. Expressed by the venom duct.

The protein localises to the secreted. Its function is as follows. Inhibits the vertebrate voltage-gated potassium channels Kv1.1/KCNA1 and Kv1.3/KCNA3. In Conus vexillum (Flag cone), this protein is Kappa-conotoxin-like 2.